A 195-amino-acid polypeptide reads, in one-letter code: Translation initiation factor IF-3 (195 aa).

The interval 158–195 (EQSEVQQRPKREGRNMIMFLSPRKTPLIKKEEDAKENN) is disordered. The span at 185-195 (IKKEEDAKENN) shows a compositional bias: basic and acidic residues.

The protein belongs to the IF-3 family. As to quaternary structure, monomer.

It is found in the cytoplasm. In terms of biological role, IF-3 binds to the 30S ribosomal subunit and shifts the equilibrium between 70S ribosomes and their 50S and 30S subunits in favor of the free subunits, thus enhancing the availability of 30S subunits on which protein synthesis initiation begins. The protein is Translation initiation factor IF-3 of Prochlorococcus marinus (strain MIT 9515).